We begin with the raw amino-acid sequence, 492 residues long: Transcription factor IIIB 60 kDa subunit (492 aa).

Residues 1–30 form a TFIIB-type zinc finger; the sequence is MGCPNCGSTTFESDTASGNTYCTQCGVVVE. Positions 3, 6, 22, and 25 each coordinate Zn(2+). The disordered stretch occupies residues 440–468; that stretch reads QPRKRRRYRPRDSTSDGIADTAAESAKEM.

It belongs to the TFIIB family. As to quaternary structure, TFIIIB comprises the TATA-binding protein (TBP), the B-related factor (BRF) and a third subunit (Potential). Interacts with maf1.

The protein resides in the nucleus. General activator of RNA polymerase III transcription. In Schizosaccharomyces pombe (strain 972 / ATCC 24843) (Fission yeast), this protein is Transcription factor IIIB 60 kDa subunit (brf1).